Reading from the N-terminus, the 320-residue chain is MRISHTLLNASSKFRTVFDFGERQVAHWFPGHMAKGLKQMRASPRKVDCVIEIHDARIPFSGRNPLFQENLDVRPHLLILNKMDLADTSDKMSILKQLERDGVKNVLLTDCLKQRDTSVKKIIPLVTDLIENAPRFHREENRSYCLMVIGVPNVGKSSLINAIRRTNLKKGKASRVGGEPGITKAVLTKIQVCERPVIHLLDTPGVLPPKIENIETGMKLALCGTILDHLVGEDIIADYLLFSLNRPQRFGYVERYDLETPSDDIQHVLKCIAVKLGKTQRVKAITGVGDITVRMPNYTAAAYDFIRAFRKGELGKVMLD.

Residues 37 to 209 (LKQMRASPRK…LLDTPGVLPP (173 aa)) form the CP-type G domain. GTP-binding positions include 81–84 (NKMD), 153–158 (NVGKSS), and glycine 205.

It belongs to the TRAFAC class YlqF/YawG GTPase family. MTG1 subfamily.

Its subcellular location is the mitochondrion inner membrane. Its function is as follows. Plays a role in the regulation of the mitochondrial ribosome assembly and of translational activity. Displays mitochondrial GTPase activity. This is Mitochondrial ribosome-associated GTPase 1 from Ictalurus punctatus (Channel catfish).